The chain runs to 280 residues: tRNA pseudouridine synthase A (280 aa).

The active-site Nucleophile is aspartate 55. Tyrosine 110 is a binding site for substrate.

It belongs to the tRNA pseudouridine synthase TruA family.

It carries out the reaction uridine(38/39/40) in tRNA = pseudouridine(38/39/40) in tRNA. Its function is as follows. Formation of pseudouridine at positions 38, 39 and 40 in the anticodon stem and loop of transfer RNAs. The polypeptide is tRNA pseudouridine synthase A (Methanosphaerula palustris (strain ATCC BAA-1556 / DSM 19958 / E1-9c)).